A 341-amino-acid polypeptide reads, in one-letter code: Methionine import ATP-binding protein MetN 2 (341 aa).

Positions 2–241 (IELKEVVKEY…PQHTVTKRFV (240 aa)) constitute an ABC transporter domain. Position 38–45 (38–45 (GFSGAGKS)) interacts with ATP.

The protein belongs to the ABC transporter superfamily. Methionine importer (TC 3.A.1.24) family. The complex is composed of two ATP-binding proteins (MetN), two transmembrane proteins (MetI) and a solute-binding protein (MetQ).

The protein localises to the cell membrane. It catalyses the reaction L-methionine(out) + ATP + H2O = L-methionine(in) + ADP + phosphate + H(+). The catalysed reaction is D-methionine(out) + ATP + H2O = D-methionine(in) + ADP + phosphate + H(+). Part of the ABC transporter complex MetNIQ involved in methionine import. Responsible for energy coupling to the transport system. The polypeptide is Methionine import ATP-binding protein MetN 2 (Staphylococcus aureus (strain N315)).